The chain runs to 147 residues: D-aminoacyl-tRNA deacylase (147 aa).

Residues 137-138 carry the Gly-cisPro motif, important for rejection of L-amino acids motif; that stretch reads GP.

The protein belongs to the DTD family. Homodimer.

It is found in the cytoplasm. The catalysed reaction is glycyl-tRNA(Ala) + H2O = tRNA(Ala) + glycine + H(+). The enzyme catalyses a D-aminoacyl-tRNA + H2O = a tRNA + a D-alpha-amino acid + H(+). In terms of biological role, an aminoacyl-tRNA editing enzyme that deacylates mischarged D-aminoacyl-tRNAs. Also deacylates mischarged glycyl-tRNA(Ala), protecting cells against glycine mischarging by AlaRS. Acts via tRNA-based rather than protein-based catalysis; rejects L-amino acids rather than detecting D-amino acids in the active site. By recycling D-aminoacyl-tRNA to D-amino acids and free tRNA molecules, this enzyme counteracts the toxicity associated with the formation of D-aminoacyl-tRNA entities in vivo and helps enforce protein L-homochirality. The protein is D-aminoacyl-tRNA deacylase of Bacillus licheniformis (strain ATCC 14580 / DSM 13 / JCM 2505 / CCUG 7422 / NBRC 12200 / NCIMB 9375 / NCTC 10341 / NRRL NRS-1264 / Gibson 46).